Consider the following 289-residue polypeptide: Probable WRKY transcription factor 38 (289 aa).

Positions 62-103 (PETEDDQFSDLSSRDSSPPPQGSPSKKRKIDSTNSSENWRDD) are disordered. Residues 104–172 (SPDPIYYDGY…YFGHHTCKTE (69 aa)) constitute a DNA-binding region (WRKY). Low complexity predominate over residues 249–266 (LSSPSGSYPPSSSSGSES). The tract at residues 249-278 (LSSPSGSYPPSSSSGSESADFNSDLLFDNP) is disordered.

It belongs to the WRKY group III family.

Its subcellular location is the nucleus. Functionally, transcription factor. Interacts specifically with the W box (5'-(T)TGAC[CT]-3'), a frequently occurring elicitor-responsive cis-acting element. This chain is Probable WRKY transcription factor 38 (WRKY38), found in Arabidopsis thaliana (Mouse-ear cress).